The primary structure comprises 298 residues: Glutamyl-Q tRNA(Asp) synthetase (298 aa).

L-glutamate contacts are provided by residues 12–16 and E48; that span reads RFAPT. The 'HIGH' region signature appears at 15 to 25; that stretch reads PTPSGYLHFGS. Zn(2+) is bound by residues C104, C106, Y118, and C122. Residues Y175 and R193 each coordinate L-glutamate. A 'KMSKS' region motif is present at residues 231-235; that stretch reads KLGKS. K234 lines the ATP pocket.

The protein belongs to the class-I aminoacyl-tRNA synthetase family. GluQ subfamily. Requires Zn(2+) as cofactor.

In terms of biological role, catalyzes the tRNA-independent activation of glutamate in presence of ATP and the subsequent transfer of glutamate onto a tRNA(Asp). Glutamate is transferred on the 2-amino-5-(4,5-dihydroxy-2-cyclopenten-1-yl) moiety of the queuosine in the wobble position of the QUC anticodon. The polypeptide is Glutamyl-Q tRNA(Asp) synthetase (Pseudomonas fluorescens (strain ATCC BAA-477 / NRRL B-23932 / Pf-5)).